The chain runs to 105 residues: Large ribosomal subunit protein uL24 (105 aa).

The protein belongs to the universal ribosomal protein uL24 family. Part of the 50S ribosomal subunit.

In terms of biological role, one of two assembly initiator proteins, it binds directly to the 5'-end of the 23S rRNA, where it nucleates assembly of the 50S subunit. Functionally, one of the proteins that surrounds the polypeptide exit tunnel on the outside of the subunit. The chain is Large ribosomal subunit protein uL24 from Francisella tularensis subsp. novicida (strain U112).